A 436-amino-acid chain; its full sequence is Glutamate-1-semialdehyde 2,1-aminomutase (436 aa).

K274 is subject to N6-(pyridoxal phosphate)lysine.

The protein belongs to the class-III pyridoxal-phosphate-dependent aminotransferase family. HemL subfamily. As to quaternary structure, homodimer. Pyridoxal 5'-phosphate serves as cofactor.

The protein resides in the cytoplasm. It catalyses the reaction (S)-4-amino-5-oxopentanoate = 5-aminolevulinate. It functions in the pathway porphyrin-containing compound metabolism; protoporphyrin-IX biosynthesis; 5-aminolevulinate from L-glutamyl-tRNA(Glu): step 2/2. This Albidiferax ferrireducens (strain ATCC BAA-621 / DSM 15236 / T118) (Rhodoferax ferrireducens) protein is Glutamate-1-semialdehyde 2,1-aminomutase.